A 351-amino-acid chain; its full sequence is Serine protease inhibitor dipetalogastin (351 aa).

Positions 1 to 131 (LIKELVNMVI…AETTNAMEVL (131 aa)) are excised as a propeptide. 6 Kazal-like domains span residues 19–69 (KELK…PCDE), 72–122 (HDFE…ECHA), 131–181 (LFQG…PCDE), 184–234 (HDFE…ECHP), 240–289 (QLIL…ECKV), and 297–347 (GEVR…RCLP). 18 cysteine pairs are disulfide-bonded: cysteine 25/cysteine 50, cysteine 27/cysteine 46, cysteine 35/cysteine 67, cysteine 78/cysteine 103, cysteine 80/cysteine 99, cysteine 88/cysteine 120, cysteine 137/cysteine 162, cysteine 139/cysteine 158, cysteine 147/cysteine 179, cysteine 190/cysteine 215, cysteine 192/cysteine 211, cysteine 200/cysteine 232, cysteine 246/cysteine 271, cysteine 248/cysteine 267, cysteine 256/cysteine 287, cysteine 303/cysteine 328, cysteine 305/cysteine 324, and cysteine 313/cysteine 345.

The protein resides in the secreted. Its function is as follows. Thrombin inhibitor. Prevents blood clotting to allow insect to feed on blood. Also functions as an inhibitor of trypsin and plasmin. This Dipetalogaster maximus (Blood-sucking bug) protein is Serine protease inhibitor dipetalogastin.